The following is a 436-amino-acid chain: Adenylosuccinate synthetase (436 aa).

GTP-binding positions include 12–18 and 40–42; these read GDEGKGK and GHT. Residue aspartate 13 is the Proton acceptor of the active site. Mg(2+)-binding residues include aspartate 13 and glycine 40. IMP-binding positions include 13–16, 38–41, threonine 128, arginine 142, glutamine 223, threonine 238, and arginine 302; these read DEGK and NAGH. Histidine 41 functions as the Proton donor in the catalytic mechanism. A substrate-binding site is contributed by 298-304; sequence TTTGRRR. GTP contacts are provided by residues arginine 304, 330 to 332, and 412 to 414; these read KLD and SLG.

The protein belongs to the adenylosuccinate synthetase family. Homodimer. The cofactor is Mg(2+).

Its subcellular location is the cytoplasm. The enzyme catalyses IMP + L-aspartate + GTP = N(6)-(1,2-dicarboxyethyl)-AMP + GDP + phosphate + 2 H(+). It functions in the pathway purine metabolism; AMP biosynthesis via de novo pathway; AMP from IMP: step 1/2. Plays an important role in the de novo pathway of purine nucleotide biosynthesis. Catalyzes the first committed step in the biosynthesis of AMP from IMP. This is Adenylosuccinate synthetase from Prochlorococcus marinus (strain MIT 9312).